The primary structure comprises 117 residues: Immunoglobulin kappa variable 1-5 (117 aa).

The signal sequence occupies residues 1–22 (MDMRVPAQLLGLLLLWLPGAKC). The segment at 23–45 (DIQMTQSPSTLSASVGDRVTITC) is framework-1. One can recognise an Ig-like domain in the interval 24-117 (IQMTQSPSTL…YYCQQYNSYS (94 aa)). Cysteine 45 and cysteine 110 are joined by a disulfide. Residues 46–56 (RASQSISSWLA) are complementarity-determining-1. The interval 57–71 (WYQQKPGKAPKLLIY) is framework-2. The interval 72–78 (KASSLES) is complementarity-determining-2. The tract at residues 79–110 (GVPSRFSGSGSGTEFTLTISSLQPDDFATYYC) is framework-3. Residues 111–117 (QQYNSYS) form a complementarity-determining-3 region.

Immunoglobulins are composed of two identical heavy chains and two identical light chains; disulfide-linked.

Its subcellular location is the secreted. The protein resides in the cell membrane. Its function is as follows. V region of the variable domain of immunoglobulin light chains that participates in the antigen recognition. Immunoglobulins, also known as antibodies, are membrane-bound or secreted glycoproteins produced by B lymphocytes. In the recognition phase of humoral immunity, the membrane-bound immunoglobulins serve as receptors which, upon binding of a specific antigen, trigger the clonal expansion and differentiation of B lymphocytes into immunoglobulins-secreting plasma cells. Secreted immunoglobulins mediate the effector phase of humoral immunity, which results in the elimination of bound antigens. The antigen binding site is formed by the variable domain of one heavy chain, together with that of its associated light chain. Thus, each immunoglobulin has two antigen binding sites with remarkable affinity for a particular antigen. The variable domains are assembled by a process called V-(D)-J rearrangement and can then be subjected to somatic hypermutations which, after exposure to antigen and selection, allow affinity maturation for a particular antigen. This Homo sapiens (Human) protein is Immunoglobulin kappa variable 1-5.